The primary structure comprises 359 residues: N-acetyl-gamma-glutamyl-phosphate reductase (359 aa).

Residue cysteine 162 is part of the active site.

Belongs to the NAGSA dehydrogenase family. Type 1 subfamily.

It localises to the cytoplasm. It catalyses the reaction N-acetyl-L-glutamate 5-semialdehyde + phosphate + NADP(+) = N-acetyl-L-glutamyl 5-phosphate + NADPH + H(+). It functions in the pathway amino-acid biosynthesis; L-arginine biosynthesis; N(2)-acetyl-L-ornithine from L-glutamate: step 3/4. Functionally, catalyzes the NADPH-dependent reduction of N-acetyl-5-glutamyl phosphate to yield N-acetyl-L-glutamate 5-semialdehyde. The chain is N-acetyl-gamma-glutamyl-phosphate reductase from Prochlorococcus marinus (strain NATL2A).